A 131-amino-acid chain; its full sequence is Aspartate 1-decarboxylase (131 aa).

Ser25 acts as the Schiff-base intermediate with substrate; via pyruvic acid in catalysis. At Ser25 the chain carries Pyruvic acid (Ser). Thr57 provides a ligand contact to substrate. Tyr58 (proton donor) is an active-site residue. 73–75 (GAA) contributes to the substrate binding site.

Belongs to the PanD family. Heterooctamer of four alpha and four beta subunits. It depends on pyruvate as a cofactor. In terms of processing, is synthesized initially as an inactive proenzyme, which is activated by self-cleavage at a specific serine bond to produce a beta-subunit with a hydroxyl group at its C-terminus and an alpha-subunit with a pyruvoyl group at its N-terminus.

It localises to the cytoplasm. It carries out the reaction L-aspartate + H(+) = beta-alanine + CO2. Its pathway is cofactor biosynthesis; (R)-pantothenate biosynthesis; beta-alanine from L-aspartate: step 1/1. Its function is as follows. Catalyzes the pyruvoyl-dependent decarboxylation of aspartate to produce beta-alanine. The sequence is that of Aspartate 1-decarboxylase from Anaeromyxobacter sp. (strain K).